A 503-amino-acid chain; its full sequence is Lysine--tRNA ligase (503 aa).

The Mg(2+) site is built by glutamate 412 and glutamate 419.

The protein belongs to the class-II aminoacyl-tRNA synthetase family. Homodimer. It depends on Mg(2+) as a cofactor.

Its subcellular location is the cytoplasm. The enzyme catalyses tRNA(Lys) + L-lysine + ATP = L-lysyl-tRNA(Lys) + AMP + diphosphate. In Buchnera aphidicola subsp. Schizaphis graminum (strain Sg), this protein is Lysine--tRNA ligase.